Reading from the N-terminus, the 416-residue chain is Ribulose bisphosphate carboxylase large chain (416 aa).

Residues N100 and T150 each coordinate substrate. Residue K152 is the Proton acceptor of the active site. K154 contacts substrate. Mg(2+)-binding residues include K178, D180, and E181. K178 carries the N6-carboxylysine modification. H271 (proton acceptor) is an active-site residue. Residues R272, H304, and S356 each coordinate substrate.

The protein belongs to the RuBisCO large chain family. Type I subfamily. In terms of assembly, heterohexadecamer of 8 large chains and 8 small chains; disulfide-linked. The disulfide link is formed within the large subunit homodimers. Requires Mg(2+) as cofactor. In terms of processing, the disulfide bond which can form in the large chain dimeric partners within the hexadecamer appears to be associated with oxidative stress and protein turnover.

It is found in the plastid. The protein resides in the chloroplast. The catalysed reaction is 2 (2R)-3-phosphoglycerate + 2 H(+) = D-ribulose 1,5-bisphosphate + CO2 + H2O. It catalyses the reaction D-ribulose 1,5-bisphosphate + O2 = 2-phosphoglycolate + (2R)-3-phosphoglycerate + 2 H(+). RuBisCO catalyzes two reactions: the carboxylation of D-ribulose 1,5-bisphosphate, the primary event in carbon dioxide fixation, as well as the oxidative fragmentation of the pentose substrate in the photorespiration process. Both reactions occur simultaneously and in competition at the same active site. This Cheiropleuria bicuspis (Fern) protein is Ribulose bisphosphate carboxylase large chain (rbcL).